Consider the following 533-residue polypeptide: MDATAFHPSLWGDFFVKYEPPTAPKRGHMTQRAELLKEEVRKTLKAAANQIKNALDLIITLQRLGLDHHYENEISELLRFVYSSSDYDDKDLYVVSLRFYLLRKHGHRVSSDVFMSFKDEEGNFVVDDTKCLLSLYNAAYLMTHGEKVLDEAITFTRRQLEALLLDPLEPALADEVYLTLQTPLFRRLRILEAVNYIPIYGKEAGRNEAILELAKLNFNLAQLIYCEELKEVTLWWKQLNVETNLSFIRDRIVECHFWMTGACCEPRYSLSRVIATKMTALITVLDDMMDTYSTTEEAMLLAEAIYRWEENAAELLPGYMKHFYLYLLKTIDSCGGELGPNRSFRTFYLKEMLKVFVRGSSQEIKWRNENYVPKTISEHLEHSGPTVGAFQVACSSFVGMGDNITKESFEWLLTYPELVKSLMNIARLLNDTASTKREQTAGHHVSTVQCYMLKHGTTMDEACEKIKELTEDSWKDMMELYLTPTEHPKLVAQTIVDFARTADYMYKETDGFTFSHTIKDMIAKLFVDPISLF.

Aspartate 286, aspartate 290, asparagine 430, serine 434, and glutamate 438 together coordinate Mg(2+). A DDXXD motif motif is present at residues 286 to 290 (DDMMD).

The protein belongs to the terpene synthase family. Mg(2+) serves as cofactor. The cofactor is Co(2+). Mn(2+) is required as a cofactor.

The protein localises to the cytoplasm. It catalyses the reaction (2E,6E)-farnesyl diphosphate = (E)-beta-farnesene + diphosphate. It participates in secondary metabolite biosynthesis; terpenoid biosynthesis. Sesquiterpene cyclase catalyzing the production of sixfold more beta-farnesene than alpha-bergamotene from farnesyl diphosphate. Involved in indirect defense by producing volatile signals attracting natural enemies of herbivores. In Zea perennis (Perennial teosinte), this protein is (E)-beta-farnesene synthase.